We begin with the raw amino-acid sequence, 175 residues long: Cytidylate kinase (175 aa).

Gly-7–Thr-15 lines the ATP pocket.

This sequence belongs to the cytidylate kinase family. Type 2 subfamily.

It is found in the cytoplasm. It carries out the reaction CMP + ATP = CDP + ADP. The enzyme catalyses dCMP + ATP = dCDP + ADP. In Methanococcoides burtonii (strain DSM 6242 / NBRC 107633 / OCM 468 / ACE-M), this protein is Cytidylate kinase.